The primary structure comprises 454 residues: Natural cytotoxicity triggering receptor 3 ligand 1 (454 aa).

Residues 1–24 form the signal peptide; it reads MTWRAAASTCAALLILLWALTTEG. Residues 25–262 are Extracellular-facing; that stretch reads DLKVEMMAGG…SETEKTDNFS (238 aa). Positions 27–138 constitute an Ig-like V-type domain; the sequence is KVEMMAGGTQ…LKAQGTVQLE (112 aa). Residues Asn-43 and Asn-57 are each glycosylated (N-linked (GlcNAc...) asparagine). Residues Cys-48 and Cys-122 are joined by a disulfide bond. Interaction with NCR3 regions lie at residues 59–62 and 127–130; these read TSMG and TPLK. Positions 143–244 constitute an Ig-like C1-type domain; sequence PASRLLLDQV…LHTPLRSNFT (102 aa). A disulfide bridge links Cys-163 with Cys-228. N-linked (GlcNAc...) asparagine glycosylation is found at Asn-174, Asn-208, Asn-216, Asn-242, and Asn-260. The chain crosses the membrane as a helical span at residues 263-283; the sequence is IHWWPISFIGVGLVLLIVLIP. Topologically, residues 284-454 are cytoplasmic; it reads WKKICNKSSS…QPPTLLLPLQ (171 aa). The interval 291-429 is retroviral-Gag-like; sequence SSSAYTPLKC…APILPVSPIW (139 aa). Residues 395-454 are disordered; that stretch reads GKSIDDNSTKSEKQTPREHSDAVPDAPILPVSPIWEPPPATTSTTPVLSSQPPTLLLPLQ. Basic and acidic residues predominate over residues 397 to 416; it reads SIDDNSTKSEKQTPREHSDA. The segment covering 435–454 has biased composition (low complexity); that stretch reads TTSTTPVLSSQPPTLLLPLQ.

In terms of assembly, monomer. Interacts specifically with NCR3, but not with other natural killer cell-activating receptors, including NCR1, NCR2 and KLRK1. As to expression, not detected in any normal tissue tested. Expressed at the surface of several tumor cell lines including T and B-lymphomas, myeloid leukemias, melanomas, carcinomas and large T SV40 antigen-transformed cells (at protein level).

It localises to the cell membrane. Triggers NCR3-dependent natural killer cell activation. The polypeptide is Natural cytotoxicity triggering receptor 3 ligand 1 (NCR3LG1) (Homo sapiens (Human)).